We begin with the raw amino-acid sequence, 212 residues long: ER lumen protein-retaining receptor 2 (212 aa).

Topologically, residues 1–4 (MNIF) are lumenal. Residues 5–24 (RLTGDLSHLAAIIILLLKIW) form a helical membrane-spanning segment. Topologically, residues 25 to 32 (KSRSCAGI) are cytoplasmic. A helical membrane pass occupies residues 33–52 (SGKSQILFALVFTTRYLDLL). An interaction with the K-D-E-L motif on target proteins region spans residues 47 to 48 (RY). Residues 53–58 (TSFISL) are Lumenal-facing. The helical transmembrane segment at 59–79 (YNTCMKVIYIGCAYATVYLIY) threads the bilayer. At 80–92 (AKFRATYDGNHDT) the chain is on the cytoplasmic side. The helical transmembrane segment at 93–110 (FRAEFLVVPVGGLAFLVN) threads the bilayer. The Lumenal portion of the chain corresponds to 111 to 116 (HDFSPL). Residues 117–135 (EILWTFSIYLESVAILPQL) form a helical membrane-spanning segment. Residues 136-149 (FMISKTGEAETITT) lie on the Cytoplasmic side of the membrane. A helical transmembrane segment spans residues 150–168 (HYLFCLGVYRALYLFNWIW). The segment at 159 to 169 (RALYLFNWIWR) is interaction with the K-D-E-L motif on target proteins. Residues 169–178 (RFYFEGFFDM) are Lumenal-facing. A helical transmembrane segment spans residues 179–199 (IAIVAGVVQTILYCDFFYLYV). Over 200-212 (TKVLKGKKLSLPA) the chain is Cytoplasmic. Residues 204–207 (KGKK) are important for recycling of cargo proteins with the sequence motif K-D-E-L from the Golgi to the endoplasmic reticulum.

Belongs to the ERD2 family.

Its subcellular location is the endoplasmic reticulum membrane. It localises to the golgi apparatus membrane. It is found in the cytoplasmic vesicle. The protein localises to the COPI-coated vesicle membrane. Functionally, receptor for the C-terminal sequence motif K-D-E-L that is present on endoplasmic reticulum resident proteins and that mediates their recycling from the Golgi back to the endoplasmic reticulum. Binding is pH dependent, and is optimal at pH 5-5.4. This is ER lumen protein-retaining receptor 2 (kdelr2) from Danio rerio (Zebrafish).